The chain runs to 676 residues: LIM domain-containing protein 1 (676 aa).

A mediates nuclear export region spans residues 54 to 134 (KIHLQQQQQQ…PPYPPQEQRS (81 aa)). Disordered regions lie at residues 104 to 163 (KPPL…SAFH) and 189 to 389 (KWGD…TSLV). Residue serine 145 is modified to Phosphoserine. The interval 186–260 (ASPKWGDKPG…IGGRSSEKPT (75 aa)) is interaction with EGLN1/PHD2. Low complexity-rich tracts occupy residues 201–213 (GLSV…SSPG) and 232–242 (LSLSSSRSSEG). 2 positions are modified to phosphoserine: serine 233 and serine 239. Residues 243–253 (SLGGQNSGIGG) show a composition bias toward gly residues. Over residues 262-271 (LWSTASSQRV) the composition is skewed to polar residues. 4 positions are modified to phosphoserine: serine 272, serine 277, serine 304, and serine 316. A compositionally biased stretch (low complexity) spans 343-360 (SYLSSSAPSSSPAGLDGS). Residues 404–442 (GPLGWSSDGSLGSVLLDSPSSPRVRLPCQPLVPGPELRP) form an interaction with RB1 region. Phosphoserine occurs at positions 421 and 424. 3 LIM zinc-binding domains span residues 470–531 (GACV…SGFQ), 535–595 (DRCF…VLAP), and 595–664 (PKCA…RLEK). The necessary for nuclear localization stretch occupies residues 472–676 (CVKCSKGVFG…SSTALHQHHF (205 aa)).

This sequence belongs to the zyxin/ajuba family. As to quaternary structure, interacts (via LIM domains) with TRAF6. Found in a complex with TRAF6, PRKCZ and SQSTM1. Interacts (via LIM domains) SNAI2/SLUG (via SNAG domain) and SCRT1 (via SNAG domain). Interacts with SQSTM1 and RB1. Found in a complex composed of LIMD1, VHL, EGLN1/PHD2, ELOB and CUL2. Interacts with EIF4E, AGO1, AGO2, DCP2, DDX6, LATS1, LATS2, EGLN1/PHD2, EGLN2/PHD1 and EGLN3/PHD3. Interacts (via LIM zinc-binding 2) with isoform 1 and isoform 3 of VHL. Interacts (via LIM domains) with SNAI1 (via SNAG domain). Phosphorylated during mitosis. In terms of tissue distribution, expressed in normal and breast cancer tissues (at protein level). Ubiquitous.

It localises to the cytoplasm. The protein resides in the nucleus. The protein localises to the P-body. It is found in the cell junction. Its subcellular location is the adherens junction. It localises to the focal adhesion. Functionally, adapter or scaffold protein which participates in the assembly of numerous protein complexes and is involved in several cellular processes such as cell fate determination, cytoskeletal organization, repression of gene transcription, cell-cell adhesion, cell differentiation, proliferation and migration. Positively regulates microRNA (miRNA)-mediated gene silencing and is essential for P-body formation and integrity. Acts as a hypoxic regulator by bridging an association between the prolyl hydroxylases and VHL enabling efficient degradation of HIF1A. Acts as a transcriptional corepressor for SNAI1- and SNAI2/SLUG-dependent repression of E-cadherin transcription. Negatively regulates the Hippo signaling pathway and antagonizes phosphorylation of YAP1. Inhibits E2F-mediated transcription, and suppresses the expression of the majority of genes with E2F1-responsive elements. Regulates osteoblast development, function, differentiation and stress osteoclastogenesis. Enhances the ability of TRAF6 to activate adapter protein complex 1 (AP-1) and negatively regulates the canonical Wnt receptor signaling pathway in osteoblasts. May act as a tumor suppressor by inhibiting cell proliferation. The polypeptide is LIM domain-containing protein 1 (LIMD1) (Homo sapiens (Human)).